The chain runs to 165 residues: AIG2-like protein A (165 aa).

15–20 (YGSFQD) contacts substrate. Glu-83 (proton acceptor) is an active-site residue.

Belongs to the gamma-glutamylcyclotransferase family. In terms of tissue distribution, expressed only in seeds.

Its function is as follows. Putative gamma-glutamylcyclotransferase. This Arabidopsis thaliana (Mouse-ear cress) protein is AIG2-like protein A.